A 465-amino-acid polypeptide reads, in one-letter code: Gamma-aminobutyric acid receptor subunit rho-2 (465 aa).

The signal sequence occupies residues 1–20; it reads MPYFMRLALFLFCLMALVES. Residues 21 to 260 are Extracellular-facing; sequence RKPRRKRWTG…LYINFTLRRH (240 aa). Arg-105 contacts 4-aminobutanoate. A glycan (N-linked (GlcNAc...) asparagine) is linked at Asn-120. Residue Ser-169 coordinates 4-aminobutanoate. Cysteines 178 and 192 form a disulfide. Glu-197 lines the 4-aminobutanoate pocket. An N-linked (GlcNAc...) asparagine glycan is attached at Asn-254. A helical transmembrane segment spans residues 261-281; that stretch reads IFFFLLQTYFPATLMVMLSWV. Topologically, residues 282-293 are cytoplasmic; the sequence is SFWIDHRAVPAR. Residues 294 to 314 traverse the membrane as a helical segment; sequence VSLGIMTVLTMSTIITGVNAS. Residues 315–325 are Extracellular-facing; the sequence is MPRVSYIRAVD. Residues 326–346 traverse the membrane as a helical segment; that stretch reads IYLWVSFVFVFLSVLEYAAVN. Residues 347-443 are Cytoplasmic-facing; the sequence is YLTTVQEQKE…IFQNTHAIDK (97 aa). The helical transmembrane segment at 444–464 threads the bilayer; that stretch reads YSRLIFPAFYIVFNLIYWSVF. Ser-465 is a topological domain (extracellular).

This sequence belongs to the ligand-gated ion channel (TC 1.A.9) family. Gamma-aminobutyric acid receptor (TC 1.A.9.5) subfamily. GABRR2 sub-subfamily. In terms of assembly, three rho subunits (rho-1/GBRR1, rho-2/GBRR2 and rho-3/GBRR3) coassemble either to form functional homopentamers or heteropentamers. Rho-2 is unable to form a functional homopentamer. Interacts with SQSTM1. In terms of tissue distribution, expressed in spinal cord and in cerebellum. Expressed in retina.

Its subcellular location is the postsynaptic cell membrane. It is found in the cell membrane. It carries out the reaction chloride(in) = chloride(out). With respect to regulation, in contrast with rho-1 and rho-3 homopentamers, rho-2 GABAARs are not inhibited by picrotoxin. Its function is as follows. Rho subunit of the pentameric ligand-gated chloride channels responsible for mediating the effects of gamma-aminobutyric acid (GABA), the major inhibitory neurotransmitter in the brain. Rho-containing GABA-gated chloride channels are a subclass of GABA(A) receptors (GABAARs) entirely composed of rho subunits, where GABA molecules bind at the rho intersubunit interfaces. When activated by GABA, rho-GABAARs selectively allow the flow of chloride anions across the cell membrane down their electrochemical gradient. Rho-2 GABAARs may contribute to the regulation of glial development in the cerebellum by controlling extrasynaptic transmission. Rho-2 GABAARs are also involved in neuronal tonic (extrasynaptic) and phasic (synaptic) transmission in the Purkinje neurons of the cerebellum. Rho-2 GABAARs expressed in retina may play a role in retinal neurotransmission. This Rattus norvegicus (Rat) protein is Gamma-aminobutyric acid receptor subunit rho-2.